Consider the following 253-residue polypeptide: Sulfate transporter CysZ (253 aa).

Helical transmembrane passes span F27–V47, I71–V91, L150–F170, and I211–A231.

The protein belongs to the CysZ family.

Its subcellular location is the cell inner membrane. Its function is as follows. High affinity, high specificity proton-dependent sulfate transporter, which mediates sulfate uptake. Provides the sulfur source for the cysteine synthesis pathway. The sequence is that of Sulfate transporter CysZ from Pseudomonas syringae pv. tomato (strain ATCC BAA-871 / DC3000).